Reading from the N-terminus, the 378-residue chain is UPF0754 membrane protein Bcer98_0694 (378 aa).

Residues 358-378 form a helical membrane-spanning segment; that stretch reads LGALLGGTIGLMQGILLLFLM.

This sequence belongs to the UPF0754 family.

The protein resides in the cell membrane. This Bacillus cytotoxicus (strain DSM 22905 / CIP 110041 / 391-98 / NVH 391-98) protein is UPF0754 membrane protein Bcer98_0694.